The chain runs to 309 residues: Aspartate carbamoyltransferase catalytic subunit (309 aa).

Carbamoyl phosphate contacts are provided by R55 and T56. K85 is an L-aspartate binding site. 3 residues coordinate carbamoyl phosphate: R106, H135, and Q138. Positions 168 and 230 each coordinate L-aspartate. Carbamoyl phosphate is bound by residues L268 and P269.

The protein belongs to the aspartate/ornithine carbamoyltransferase superfamily. ATCase family. In terms of assembly, heterododecamer (2C3:3R2) of six catalytic PyrB chains organized as two trimers (C3), and six regulatory PyrI chains organized as three dimers (R2).

It catalyses the reaction carbamoyl phosphate + L-aspartate = N-carbamoyl-L-aspartate + phosphate + H(+). It participates in pyrimidine metabolism; UMP biosynthesis via de novo pathway; (S)-dihydroorotate from bicarbonate: step 2/3. In terms of biological role, catalyzes the condensation of carbamoyl phosphate and aspartate to form carbamoyl aspartate and inorganic phosphate, the committed step in the de novo pyrimidine nucleotide biosynthesis pathway. This chain is Aspartate carbamoyltransferase catalytic subunit, found in Aliivibrio salmonicida (strain LFI1238) (Vibrio salmonicida (strain LFI1238)).